Here is a 457-residue protein sequence, read N- to C-terminus: DNA repair protein RadA (457 aa).

The segment at 10–27 adopts a C4-type zinc-finger fold; sequence CQECGYESAKWMGKCPGC. 97 to 104 serves as a coordination point for ATP; it reads GDPGIGKS. Positions 254-258 match the RadA KNRFG motif motif; it reads KNRFG. Residues 353–457 form a lon-protease-like region; sequence DAYVNVAGGV…QDALEVTLGR (105 aa).

This sequence belongs to the RecA family. RadA subfamily.

In terms of biological role, DNA-dependent ATPase involved in processing of recombination intermediates, plays a role in repairing DNA breaks. Stimulates the branch migration of RecA-mediated strand transfer reactions, allowing the 3' invading strand to extend heteroduplex DNA faster. Binds ssDNA in the presence of ADP but not other nucleotides, has ATPase activity that is stimulated by ssDNA and various branched DNA structures, but inhibited by SSB. Does not have RecA's homology-searching function. The polypeptide is DNA repair protein RadA (Halalkalibacterium halodurans (strain ATCC BAA-125 / DSM 18197 / FERM 7344 / JCM 9153 / C-125) (Bacillus halodurans)).